We begin with the raw amino-acid sequence, 271 residues long: Formamidopyrimidine-DNA glycosylase (271 aa).

Proline 2 (schiff-base intermediate with DNA) is an active-site residue. Residue glutamate 3 is the Proton donor of the active site. The active-site Proton donor; for beta-elimination activity is lysine 58. Residues histidine 91, arginine 110, and arginine 152 each contribute to the DNA site. Residues 237–271 (WVYGRTGQPCRKCGALVSKTRQGQRSSFFCAQCQK) form an FPG-type zinc finger. The active-site Proton donor; for delta-elimination activity is arginine 261.

It belongs to the FPG family. As to quaternary structure, monomer. It depends on Zn(2+) as a cofactor.

The catalysed reaction is Hydrolysis of DNA containing ring-opened 7-methylguanine residues, releasing 2,6-diamino-4-hydroxy-5-(N-methyl)formamidopyrimidine.. It catalyses the reaction 2'-deoxyribonucleotide-(2'-deoxyribose 5'-phosphate)-2'-deoxyribonucleotide-DNA = a 3'-end 2'-deoxyribonucleotide-(2,3-dehydro-2,3-deoxyribose 5'-phosphate)-DNA + a 5'-end 5'-phospho-2'-deoxyribonucleoside-DNA + H(+). In terms of biological role, involved in base excision repair of DNA damaged by oxidation or by mutagenic agents. Acts as a DNA glycosylase that recognizes and removes damaged bases. Has a preference for oxidized purines, such as 7,8-dihydro-8-oxoguanine (8-oxoG). Has AP (apurinic/apyrimidinic) lyase activity and introduces nicks in the DNA strand. Cleaves the DNA backbone by beta-delta elimination to generate a single-strand break at the site of the removed base with both 3'- and 5'-phosphates. This is Formamidopyrimidine-DNA glycosylase from Nitrosomonas eutropha (strain DSM 101675 / C91 / Nm57).